The chain runs to 331 residues: Ferrochelatase (331 aa).

Fe cation contacts are provided by histidine 187 and glutamate 286.

Belongs to the ferrochelatase family.

It localises to the cytoplasm. The catalysed reaction is heme b + 2 H(+) = protoporphyrin IX + Fe(2+). Its pathway is porphyrin-containing compound metabolism; protoheme biosynthesis; protoheme from protoporphyrin-IX: step 1/1. Its function is as follows. Catalyzes the ferrous insertion into protoporphyrin IX. The sequence is that of Ferrochelatase from Legionella pneumophila subsp. pneumophila (strain Philadelphia 1 / ATCC 33152 / DSM 7513).